Consider the following 140-residue polypeptide: Large ribosomal subunit protein uL14 (140 aa).

This sequence belongs to the universal ribosomal protein uL14 family. Component of the large ribosomal subunit.

It localises to the cytoplasm. Component of the large ribosomal subunit. The ribosome is a large ribonucleoprotein complex responsible for the synthesis of proteins in the cell. The protein is Large ribosomal subunit protein uL14 (rpl23) of Ictalurus punctatus (Channel catfish).